The following is an 865-amino-acid chain: Taste receptor type 1 member 3 (865 aa).

The signal sequence occupies residues 1-24 (MPGLALLGLTALLGLTALLDHGEG). Over 25 to 573 (ATSCLSQQLR…FLAWGEPAVL (549 aa)) the chain is Extracellular. Asn134 and Asn267 each carry an N-linked (GlcNAc...) asparagine glycan. Residues 574 to 594 (LLLALLALALGLALAALGLFL) traverse the membrane as a helical segment. The Cytoplasmic portion of the chain corresponds to 595–606 (WHSDSPLVQASG). A helical membrane pass occupies residues 607–627 (GPRACFGLACLGLVCLSVLLF). Over 628-642 (PGQPGPASCLAQQPL) the chain is Extracellular. The chain crosses the membrane as a helical span at residues 643 to 663 (FHLPLTGCLSTFFLQAAEIFV). Topologically, residues 664-685 (GSELPPSWAEKMRGRLRGPWAW) are cytoplasmic. The chain crosses the membrane as a helical span at residues 686 to 706 (LVVLLAMLAEAALCAWYLVAF). Topologically, residues 707–732 (PPEVVTDWRVLPTEALVHCHVHSWIS) are extracellular. Residues 733-753 (FGLVHATNAMLAFLCFLGTFL) form a helical membrane-spanning segment. At 754-765 (VQSRPGRYNGAR) the chain is on the cytoplasmic side. The chain crosses the membrane as a helical span at residues 766–786 (GLTFAMLAYFITWISFVPLFA). Topologically, residues 787–794 (NVHVAYQP) are extracellular. A helical membrane pass occupies residues 795-815 (AVQMGTILLCALGILATFHLP). Topologically, residues 816-865 (KCYLLLQRPELNTPEFFLEDNARAQGSSWGQGRGESGQKQVTPDPVTSPQ) are cytoplasmic. The tract at residues 840–865 (QGSSWGQGRGESGQKQVTPDPVTSPQ) is disordered. Residues 852–865 (GQKQVTPDPVTSPQ) are compositionally biased toward polar residues.

The protein belongs to the G-protein coupled receptor 3 family. TAS1R subfamily. Forms homodimers or a heterodimer with TAS1R1. Expressed in taste buds.

Its subcellular location is the cell membrane. Putative taste receptor. TAS1R1/TAS1R3 responds to the umami taste stimulus (the taste of monosodium glutamate). This is Taste receptor type 1 member 3 (TAS1R3) from Felis catus (Cat).